The primary structure comprises 350 residues: DNA polymerase delta subunit 3 (350 aa).

A disordered region spans residues 131-350; sequence EEKSKPLVRP…LESFFKRKAK (220 aa). Composition is skewed to basic and acidic residues over residues 146–162 and 172–195; these read TTPEETTGRKSKSKDMG and MKKDRDDKETSRQNELRKRKEENL. Thr-223 is subject to Phosphothreonine. Ser-230 carries the phosphoserine modification. Basic and acidic residues predominate over residues 234–248; sequence SPKETDSNDKDKNND. The segment covering 249–262 has biased composition (acidic residues); the sequence is DLEDLLETTAEDSL. Residues 274–286 are compositionally biased toward basic and acidic residues; that stretch reads SETEHSKEPKSEE. Residues 320–332 are compositionally biased toward polar residues; that stretch reads LSSSKKQETPSSN.

As to quaternary structure, DNA polymerase delta is a heterotrimer of POL3, POL32 and HYS2. POL32 can form homodimers.

It is found in the nucleus. Functionally, DNA polymerase delta (DNA polymerase III) participates in chromosomal DNA replication. It is required during synthesis of the leading and lagging DNA strands at the replication fork and binds at/or near replication origins and moves along DNA with the replication fork. It has 3'-5' proofreading exonuclease activity that correct errors arising during DNA replication. It is also involved in DNA synthesis during DNA repair. This Saccharomyces cerevisiae (strain ATCC 204508 / S288c) (Baker's yeast) protein is DNA polymerase delta subunit 3 (POL32).